Reading from the N-terminus, the 69-residue chain is Cold shock-like protein CspC (69 aa).

The CSD domain maps to 6–66; sequence GQVKWFNESK…GQKGPAAVNV (61 aa).

It is found in the cytoplasm. This is Cold shock-like protein CspC (cspC) from Shigella flexneri.